The sequence spans 117 residues: Ribonuclease P protein component (117 aa).

It belongs to the RnpA family. As to quaternary structure, consists of a catalytic RNA component (M1 or rnpB) and a protein subunit.

The catalysed reaction is Endonucleolytic cleavage of RNA, removing 5'-extranucleotides from tRNA precursor.. Functionally, RNaseP catalyzes the removal of the 5'-leader sequence from pre-tRNA to produce the mature 5'-terminus. It can also cleave other RNA substrates such as 4.5S RNA. The protein component plays an auxiliary but essential role in vivo by binding to the 5'-leader sequence and broadening the substrate specificity of the ribozyme. The sequence is that of Ribonuclease P protein component from Thermotoga maritima (strain ATCC 43589 / DSM 3109 / JCM 10099 / NBRC 100826 / MSB8).